Here is a 130-residue protein sequence, read N- to C-terminus: Holo-[acyl-carrier-protein] synthase (130 aa).

Mg(2+) is bound by residues D8 and E62.

It belongs to the P-Pant transferase superfamily. AcpS family. Mg(2+) serves as cofactor.

Its subcellular location is the cytoplasm. It carries out the reaction apo-[ACP] + CoA = holo-[ACP] + adenosine 3',5'-bisphosphate + H(+). In terms of biological role, transfers the 4'-phosphopantetheine moiety from coenzyme A to a Ser of acyl-carrier-protein. In Variovorax paradoxus (strain S110), this protein is Holo-[acyl-carrier-protein] synthase.